The sequence spans 379 residues: Putative glutamate--cysteine ligase 2 (379 aa).

It belongs to the glutamate--cysteine ligase type 2 family. YbdK subfamily.

It carries out the reaction L-cysteine + L-glutamate + ATP = gamma-L-glutamyl-L-cysteine + ADP + phosphate + H(+). In terms of biological role, ATP-dependent carboxylate-amine ligase which exhibits weak glutamate--cysteine ligase activity. This is Putative glutamate--cysteine ligase 2 from Roseiflexus sp. (strain RS-1).